A 547-amino-acid polypeptide reads, in one-letter code: CTP synthase (547 aa).

The amidoligase domain stretch occupies residues 1-265; sequence MARYIFITGG…DQAVLDAFQI (265 aa). Ser13 contributes to the CTP binding site. Ser13 serves as a coordination point for UTP. ATP is bound by residues 14-19 and Asp71; that span reads SLGKGL. Mg(2+)-binding residues include Asp71 and Glu139. CTP-binding positions include 146-148, 186-191, and Lys222; these read DIE and KTKPTQ. UTP-binding positions include 186–191 and Lys222; that span reads KTKPTQ. Positions 291 to 546 constitute a Glutamine amidotransferase type-1 domain; that stretch reads RIAVVGKYTQ…IRAAMDNERL (256 aa). Gly352 serves as a coordination point for L-glutamine. The active-site Nucleophile; for glutamine hydrolysis is Cys379. L-glutamine-binding positions include 380–383, Glu403, and Arg474; that span reads LGMQ. Residues His519 and Glu521 contribute to the active site.

Belongs to the CTP synthase family. As to quaternary structure, homotetramer.

It carries out the reaction UTP + L-glutamine + ATP + H2O = CTP + L-glutamate + ADP + phosphate + 2 H(+). The catalysed reaction is L-glutamine + H2O = L-glutamate + NH4(+). It catalyses the reaction UTP + NH4(+) + ATP = CTP + ADP + phosphate + 2 H(+). Its pathway is pyrimidine metabolism; CTP biosynthesis via de novo pathway; CTP from UDP: step 2/2. Allosterically activated by GTP, when glutamine is the substrate; GTP has no effect on the reaction when ammonia is the substrate. The allosteric effector GTP functions by stabilizing the protein conformation that binds the tetrahedral intermediate(s) formed during glutamine hydrolysis. Inhibited by the product CTP, via allosteric rather than competitive inhibition. Catalyzes the ATP-dependent amination of UTP to CTP with either L-glutamine or ammonia as the source of nitrogen. Regulates intracellular CTP levels through interactions with the four ribonucleotide triphosphates. The protein is CTP synthase of Paracoccus denitrificans (strain Pd 1222).